We begin with the raw amino-acid sequence, 469 residues long: uncharacterized protein (469 aa).

Residues 13-81 (TPLYEQLYTF…PKIGWFAAEV (69 aa)) enclose the HTH gntR-type domain. The H-T-H motif DNA-binding region spans 41-60 (KRRLSSLLDVSTATIERAYE). At K309 the chain carries N6-(pyridoxal phosphate)lysine.

It in the C-terminal section; belongs to the class-I pyridoxal-phosphate-dependent aminotransferase family. Requires pyridoxal 5'-phosphate as cofactor.

This is an uncharacterized protein from Bacillus subtilis (strain 168).